A 141-amino-acid polypeptide reads, in one-letter code: Putative pre-16S rRNA nuclease (141 aa).

It belongs to the YqgF nuclease family.

The protein localises to the cytoplasm. In terms of biological role, could be a nuclease involved in processing of the 5'-end of pre-16S rRNA. In Aliivibrio fischeri (strain MJ11) (Vibrio fischeri), this protein is Putative pre-16S rRNA nuclease.